The primary structure comprises 191 residues: TATA-box-binding protein (191 aa).

2 tandem repeats follow at residues leucine 18–valine 94 and isoleucine 108–leucine 185.

The protein belongs to the TBP family. As to quaternary structure, belongs to the TFIID complex together with the TBP-associated factors (TAFs). Binds DNA as monomer.

It is found in the nucleus. In terms of biological role, general transcription factor that functions at the core of the DNA-binding multiprotein factor TFIID. Binding of TFIID to the TATA box is the initial transcriptional step of the pre-initiation complex (PIC), playing a role in the activation of eukaryotic genes transcribed by RNA polymerase II. In Acetabularia peniculus (Green alga), this protein is TATA-box-binding protein.